We begin with the raw amino-acid sequence, 230 residues long: UPF0173 metal-dependent hydrolase MK1542 (230 aa).

Belongs to the UPF0173 family.

The protein is UPF0173 metal-dependent hydrolase MK1542 of Methanopyrus kandleri (strain AV19 / DSM 6324 / JCM 9639 / NBRC 100938).